The following is a 228-amino-acid chain: Urease accessory protein UreF (228 aa).

The protein belongs to the UreF family. As to quaternary structure, ureD, UreF and UreG form a complex that acts as a GTP-hydrolysis-dependent molecular chaperone, activating the urease apoprotein by helping to assemble the nickel containing metallocenter of UreC. The UreE protein probably delivers the nickel.

Its subcellular location is the cytoplasm. In terms of biological role, required for maturation of urease via the functional incorporation of the urease nickel metallocenter. In Blochmanniella pennsylvanica (strain BPEN), this protein is Urease accessory protein UreF.